Here is a 370-residue protein sequence, read N- to C-terminus: Phosphate-binding protein PstS 2 (370 aa).

Residues 1-22 (MKFARSGAAVSLLAAGTLVLTA) form the signal peptide. Residue Cys-23 is the site of N-palmitoyl cysteine attachment. Cys-23 carries S-diacylglycerol cysteine lipidation. Phosphate-binding positions include 54–56 (STA), Ser-84, Asp-102, and 191–193 (SGT).

This sequence belongs to the PstS family. As to quaternary structure, the complex is composed of two ATP-binding proteins (PstB), two transmembrane proteins (PstC and PstA) and a solute-binding protein (PstS).

The protein resides in the cell membrane. Functionally, functions in inorganic phosphate uptake, although probably not the main uptake protein under phosphate starvation. Part of the ABC transporter complex PstSACB involved in phosphate import. This chain is Phosphate-binding protein PstS 2 (pstS2), found in Mycobacterium tuberculosis (strain ATCC 25618 / H37Rv).